The sequence spans 132 residues: ATP synthase epsilon chain (132 aa).

This sequence belongs to the ATPase epsilon chain family. In terms of assembly, F-type ATPases have 2 components, CF(1) - the catalytic core - and CF(0) - the membrane proton channel. CF(1) has five subunits: alpha(3), beta(3), gamma(1), delta(1), epsilon(1). CF(0) has three main subunits: a, b and c.

It is found in the cell membrane. Functionally, produces ATP from ADP in the presence of a proton gradient across the membrane. This chain is ATP synthase epsilon chain (atpC), found in Bacillus sp. (strain PS3).